The primary structure comprises 295 residues: Ribosomal protein L11 methyltransferase (295 aa).

S-adenosyl-L-methionine-binding residues include Thr-146, Gly-167, Asp-189, and Asn-231.

This sequence belongs to the methyltransferase superfamily. PrmA family.

Its subcellular location is the cytoplasm. The catalysed reaction is L-lysyl-[protein] + 3 S-adenosyl-L-methionine = N(6),N(6),N(6)-trimethyl-L-lysyl-[protein] + 3 S-adenosyl-L-homocysteine + 3 H(+). Its function is as follows. Methylates ribosomal protein L11. The chain is Ribosomal protein L11 methyltransferase from Vibrio vulnificus (strain CMCP6).